We begin with the raw amino-acid sequence, 955 residues long: Glutamyl aminopeptidase (955 aa).

At 1-17 (MDIEDKTSKMHCMKGKH) the chain is on the cytoplasmic side. The chain crosses the membrane as a helical; Signal-anchor for type II membrane protein span at residues 18–38 (VVIICGVVIAVGLILGLGLGL). Over 39-955 (GLDTKACNPP…LENSEHSNFA (917 aa)) the chain is Extracellular. Asparagine 118 and asparagine 192 each carry an N-linked (GlcNAc...) asparagine glycan. Glutamate 218 is a substrate binding site. Asparagine 319 and asparagine 335 each carry an N-linked (GlcNAc...) asparagine glycan. 352–356 (GAMEN) lines the substrate pocket. Histidine 388 is a Zn(2+) binding site. Glutamate 389 acts as the Proton acceptor in catalysis. Zn(2+) contacts are provided by histidine 392 and glutamate 411. Residues asparagine 458, asparagine 547, asparagine 584, asparagine 592, asparagine 674, asparagine 759, asparagine 823, and asparagine 836 are each glycosylated (N-linked (GlcNAc...) asparagine). Arginine 882 serves as a coordination point for substrate.

Belongs to the peptidase M1 family. As to quaternary structure, homodimer; disulfide-linked. Requires Zn(2+) as cofactor. In terms of processing, N-glycosylated. Glycosylation counts for an increased mass of about 32% of the protein mass (about 48 kDa).

Its subcellular location is the cell membrane. The catalysed reaction is Release of N-terminal glutamate (and to a lesser extent aspartate) from a peptide.. Substrate specificity is modulated by calcium which enhances the enzymatic activity for cleavage of acidic residues while reducing its activity with neutral and basic residues. Hydrolytic activity is inhibited by the aminopeptidase inhibitor (Leu and acidic inhibitor) amastatin, but not by bestatin (aminopeptidase inhibitor Leu inhibitor), leupeptin, pepstatin A and PMSF. Its hydrolytic activity is also strongly reduced by zinc ions, with a complete inhibition at 0.5 mM, and moderately inhibited by cobalt and copper ions. Venom protein that cleaves N-terminal acidic residues from peptides with high potency in presence of calcium. It may have several roles in venom including alteration of blood pressure by cleaving circulating angiotensin-2, general degradation of host tissue, increase of permeability to other venom components, and/or processing of other toxins in the venom. This is Glutamyl aminopeptidase from Bitis rhinoceros (West African gaboon viper).